A 44-amino-acid polypeptide reads, in one-letter code: MDGTAFFFTIFVWFLLISVTGYSIYVGFGPTSSALRDPFEEHED.

The helical transmembrane segment at 6 to 26 (FFFTIFVWFLLISVTGYSIYV) threads the bilayer.

This sequence belongs to the PsbN family.

The protein localises to the plastid. The protein resides in the chloroplast thylakoid membrane. May play a role in photosystem I and II biogenesis. The sequence is that of Protein PsbN from Bigelowiella natans (Pedinomonas minutissima).